The following is a 460-amino-acid chain: UDP-glucuronate 4-epimerase 6 (460 aa).

2 helical membrane-spanning segments follow: residues 41–61 (ATLL…PPLS) and 111–131 (GLSV…SLAL). 113–144 (SVLVTGAAGFVGSHCSLALRKRGDGVLGFDNF) is a binding site for NAD(+). The active-site Proton acceptor is tyrosine 263.

Belongs to the NAD(P)-dependent epimerase/dehydratase family. Homodimer. In terms of tissue distribution, in roots, leaf veins, siliques, flowers, pollen and stems.

The protein localises to the golgi apparatus. Its subcellular location is the golgi stack membrane. It catalyses the reaction UDP-alpha-D-glucuronate = UDP-alpha-D-galacturonate. Involved in the synthesis of the negatively charged monosaccharide that forms the backbone of pectic cell wall components. The protein is UDP-glucuronate 4-epimerase 6 (GAE6) of Arabidopsis thaliana (Mouse-ear cress).